Reading from the N-terminus, the 431-residue chain is Gamma-glutamyl phosphate reductase (431 aa).

Belongs to the gamma-glutamyl phosphate reductase family.

It localises to the cytoplasm. It carries out the reaction L-glutamate 5-semialdehyde + phosphate + NADP(+) = L-glutamyl 5-phosphate + NADPH + H(+). It participates in amino-acid biosynthesis; L-proline biosynthesis; L-glutamate 5-semialdehyde from L-glutamate: step 2/2. Catalyzes the NADPH-dependent reduction of L-glutamate 5-phosphate into L-glutamate 5-semialdehyde and phosphate. The product spontaneously undergoes cyclization to form 1-pyrroline-5-carboxylate. This Methylobacterium sp. (strain 4-46) protein is Gamma-glutamyl phosphate reductase.